We begin with the raw amino-acid sequence, 600 residues long: NAD-dependent malic enzyme, mitochondrial (600 aa).

The transit peptide at 1 to 68 (MTRTPFTLSL…NMPIAAPVRT (68 aa)) directs the protein to the mitochondrion. Arg-93 lines the fumarate pocket. The Proton donor role is filled by Tyr-138. Residue Arg-194 participates in (S)-malate binding. NAD(+) is bound at residue Arg-194. Catalysis depends on Lys-212, which acts as the Proton acceptor. A divalent metal cation-binding residues include Glu-283, Asp-284, and Asp-307. NAD(+) is bound by residues Gly-344 and Ala-347. 2 residues coordinate (S)-malate: Asn-458 and Asn-502.

Belongs to the malic enzymes family. Mg(2+) is required as a cofactor. Requires Mn(2+) as cofactor.

It is found in the mitochondrion matrix. Its subcellular location is the cytoplasm. The protein resides in the cytosol. It localises to the nucleus. The enzyme catalyses (S)-malate + NAD(+) = pyruvate + CO2 + NADH. It carries out the reaction oxaloacetate + H(+) = pyruvate + CO2. Its function is as follows. NAD-dependent mitochondrial malic enzyme that catalyzes the oxidative decarboxylation of malate to pyruvate. In Cryptococcus neoformans var. grubii serotype A (strain H99 / ATCC 208821 / CBS 10515 / FGSC 9487) (Filobasidiella neoformans var. grubii), this protein is NAD-dependent malic enzyme, mitochondrial.